Reading from the N-terminus, the 489-residue chain is MDSLTIPPVDLRLLAPLLVVVTWATVLLLVDVFFIPDGRKKLTGYLAIGGLVVAGLVGLPLWGVTGTTFGGMLRLDPFALTLTWIFLLIGILSITMSLDYLPGQGIEQGEYYPLIMFAVSGMILLAQGTDLIVLFLGIETLSITLYILTGFAYPRLTSEEAAMKYLVLGAFAAGFFVYGIALIFGATGSTRLGEIGAYAASRGIGDLNLTLLLGGAAMVLIAFSFKVALAPFHMWTPDVYEGSPTPVAAFMSVGTKGGALAALVRLLFEGLPTLNEYWLPVLAGLTALTMVVGNLGAVAQTNVKRMLAYSSIGHAGYVMLGVMVAGEQRGPEAFLFYMLVYALSNLGAFAVLIALEHQGENAWRLDDFAGLYQRQPLLAVAMAIFMFSLAGVPPMAGFMAKFYALTAAWEGGLPWLALVGVVTSAIAAFFYLRVIIRMFMTEPEGEPTPTLNRGLTVDIALAAIGTIAIGLIPAPVFALVERSLVVLGG.

Helical transmembrane passes span 15–35 (APLLVVVTWATVLLLVDVFFI), 44–64 (GYLAIGGLVVAGLVGLPLWGV), 78–98 (FALTLTWIFLLIGILSITMSL), 106–126 (IEQGEYYPLIMFAVSGMILLA), 131–151 (LIVLFLGIETLSITLYILTGF), 166–186 (LVLGAFAAGFFVYGIALIFGA), 209–229 (LTLLLGGAAMVLIAFSFKVAL), 244–264 (PTPVAAFMSVGTKGGALAALV), 278–298 (WLPVLAGLTALTMVVGNLGAV), 306–326 (MLAYSSIGHAGYVMLGVMVAG), 333–353 (AFLFYMLVYALSNLGAFAVLI), 378–398 (LAVAMAIFMFSLAGVPPMAGF), 412–432 (GLPWLALVGVVTSAIAAFFYL), and 459–479 (IALAAIGTIAIGLIPAPVFAL).

Belongs to the complex I subunit 2 family. In terms of assembly, NDH-1 is composed of 14 different subunits. Subunits NuoA, H, J, K, L, M, N constitute the membrane sector of the complex.

The protein localises to the cell membrane. The catalysed reaction is a quinone + NADH + 5 H(+)(in) = a quinol + NAD(+) + 4 H(+)(out). Functionally, NDH-1 shuttles electrons from NADH, via FMN and iron-sulfur (Fe-S) centers, to quinones in the respiratory chain. The immediate electron acceptor for the enzyme in this species is believed to be ubiquinone. Couples the redox reaction to proton translocation (for every two electrons transferred, four hydrogen ions are translocated across the cytoplasmic membrane), and thus conserves the redox energy in a proton gradient. The sequence is that of NADH-quinone oxidoreductase subunit N from Chloroflexus aggregans (strain MD-66 / DSM 9485).